Reading from the N-terminus, the 347-residue chain is Protein pelota homolog (347 aa).

The protein belongs to the eukaryotic release factor 1 family. Pelota subfamily. Monomer. Requires a divalent metal cation as cofactor.

The protein localises to the cytoplasm. In terms of biological role, may function in recognizing stalled ribosomes, interact with stem-loop structures in stalled mRNA molecules, and effect endonucleolytic cleavage of the mRNA. May play a role in the release non-functional ribosomes and degradation of damaged mRNAs. Has endoribonuclease activity. The polypeptide is Protein pelota homolog (Methanocaldococcus jannaschii (strain ATCC 43067 / DSM 2661 / JAL-1 / JCM 10045 / NBRC 100440) (Methanococcus jannaschii)).